We begin with the raw amino-acid sequence, 351 residues long: E3 ubiquitin-protein ligase TRIM63 (351 aa).

The RING-type zinc finger occupies 23–79 (CPICLEMFTKPVVILPCQHNLCRKCANDIFQAANPYWTNRGGSVSMSGGRFRCPSCR). The interval 74 to 218 (RCPSCRHEVI…LSHKFDALYA (145 aa)) is interaction with TTN. The B box-type zinc finger occupies 117–159 (GSHPMCKEHEDEKINIYCLTCEVPTCSLCKVFGAHQACEVAPL). 4 residues coordinate Zn(2+): Cys-122, His-125, Cys-145, and His-151. Residues 189–269 (SQLEDSCRVT…VETAIQSLDE (81 aa)) adopt a coiled-coil conformation. One can recognise a COS domain in the interval 267–325 (LDEPGGATFLLSAKPLIKSIVEASKGCQLGKTEQGFENMDYFTLNLEHIAEALRAIDFG). Acidic residues predominate over residues 326–345 (TDEEEEFTEEEEEEDQEEGV). The interval 326-351 (TDEEEEFTEEEEEEDQEEGVSTEGHQ) is disordered.

In terms of assembly, homodimer. Homooligomer and heterooligomer. Interacts with SUMO2, titin/TTN and GMEB1. Interacts with TRIM54 and probably with TRIM55 and TNNI3. Forms a ternary complex with RACK1 and PRKCE. Interacts with CKM. In terms of tissue distribution, muscle specific. Selectively expressed in heart and skeletal muscle.

Its subcellular location is the cytoplasm. The protein resides in the nucleus. It is found in the myofibril. It localises to the sarcomere. The protein localises to the m line. Its subcellular location is the z line. The enzyme catalyses S-ubiquitinyl-[E2 ubiquitin-conjugating enzyme]-L-cysteine + [acceptor protein]-L-lysine = [E2 ubiquitin-conjugating enzyme]-L-cysteine + N(6)-ubiquitinyl-[acceptor protein]-L-lysine.. It participates in protein modification; protein ubiquitination. E3 ubiquitin ligase. Mediates the ubiquitination and subsequent proteasomal degradation of CKM, GMEB1 and HIBADH. Regulates the proteasomal degradation of muscle proteins under amino acid starvation, where muscle protein is catabolized to provide other organs with amino acids. Inhibits de novo skeletal muscle protein synthesis under amino acid starvation. Regulates proteasomal degradation of cardiac troponin I/TNNI3 and probably of other sarcomeric-associated proteins. May play a role in striated muscle atrophy and hypertrophy by regulating an anti-hypertrophic PKC-mediated signaling pathway. May regulate the organization of myofibrils through TTN in muscle cells. The protein is E3 ubiquitin-protein ligase TRIM63 (Trim63) of Rattus norvegicus (Rat).